Here is a 334-residue protein sequence, read N- to C-terminus: Glyoxylate reductase (334 aa).

NADP(+) contacts are provided by residues Leu-158–Ile-161, Ser-180–Thr-182, and Ile-239–Arg-241. Residues Arg-241 and Glu-270 contribute to the active site. His-288 serves as the catalytic Proton donor. NADP(+) is bound at residue His-288–Gly-290.

Belongs to the D-isomer specific 2-hydroxyacid dehydrogenase family. GyaR subfamily. As to quaternary structure, homodimer.

The protein resides in the cytoplasm. It catalyses the reaction glycolate + NAD(+) = glyoxylate + NADH + H(+). This chain is Glyoxylate reductase (gyaR), found in Pyrococcus horikoshii (strain ATCC 700860 / DSM 12428 / JCM 9974 / NBRC 100139 / OT-3).